Reading from the N-terminus, the 201-residue chain is UPF0301 protein MMAR_0053 (201 aa).

It belongs to the UPF0301 (AlgH) family.

In Mycobacterium marinum (strain ATCC BAA-535 / M), this protein is UPF0301 protein MMAR_0053.